Reading from the N-terminus, the 546-residue chain is Membrane protein insertase YidC (546 aa).

A helical transmembrane segment spans residues 8 to 28 (ILLATVLSVGILILWQVIFPT). Residues 31–70 (APPKPAHPPAAEVAKPAAPASPAPGAAAPAVPAPPPDAPE) form a disordered region. Over residues 39–60 (PAAEVAKPAAPASPAPGAAAPA) the composition is skewed to low complexity. 5 helical membrane-spanning segments follow: residues 326–346 (IDYG…LYVM), 356–376 (WGVA…PLTY), 422–442 (LGGC…YAAL), 459–479 (LTAH…SFVM), and 498–518 (FFPG…TLYI).

Belongs to the OXA1/ALB3/YidC family. Type 1 subfamily. In terms of assembly, interacts with the Sec translocase complex via SecD. Specifically interacts with transmembrane segments of nascent integral membrane proteins during membrane integration.

The protein resides in the cell inner membrane. Required for the insertion and/or proper folding and/or complex formation of integral membrane proteins into the membrane. Involved in integration of membrane proteins that insert both dependently and independently of the Sec translocase complex, as well as at least some lipoproteins. Aids folding of multispanning membrane proteins. The chain is Membrane protein insertase YidC from Anaeromyxobacter dehalogenans (strain 2CP-1 / ATCC BAA-258).